The following is a 607-amino-acid chain: Albumin B (607 aa).

An N-terminal signal peptide occupies residues 1–18 (MKWITLICLLISSSFIES). Residues 19 to 24 (RILFKR) constitute a propeptide that is removed on maturation. 3 consecutive Albumin domains span residues 22-209 (FKRD…KQLM), 210-402 (KQSH…RFMN), and 403-600 (EAKE…VLIE). Position 30 (H30) interacts with Cu cation. Intrachain disulfides connect C80–C88, C101–C117, C116–C127, C147–C192, C191–C200, C223–C269, C268–C276, C288–C302, C301–C312, C339–C384, C383–C392, C415–C461, C460–C471, C484–C500, C499–C510, C537–C582, and C581–C590.

Belongs to the ALB/AFP/VDB family. As to expression, plasma.

It is found in the secreted. In terms of biological role, serum albumin, the main protein of plasma, has a good binding capacity for water, Ca(2+), Na(+), K(+), fatty acids, hormones, bilirubin and drugs. Its main function is the regulation of the colloidal osmotic pressure of blood. The protein is Albumin B (alb-b) of Xenopus laevis (African clawed frog).